The primary structure comprises 1538 residues: CLIP-associating protein 1 (1538 aa).

HEAT repeat units lie at residues 87-124 and 163-200; these read AQIG…QAAN and LTLS…HVGE. Positions 235–292 are disordered; the sequence is SANDKNFDDEDSVDGNRPSSASSTSSKAPPSSRRNVGMGTTRRLGSSTLGSKSSAAKE. S246 is subject to Phosphoserine. Residues 251 to 268 show a composition bias toward low complexity; the sequence is RPSSASSTSSKAPPSSRR. HEAT repeat units follow at residues 405–440 and 441–477; these read HGAE…IRHT and HIPR…EWQT. The disordered stretch occupies residues 543–783; the sequence is SDSIVSLPQS…DRFGLGQPGR (241 aa). A phosphoserine mark is found at S545, S548, S558, S559, and S568. Low complexity predominate over residues 548–567; the sequence is SLPQSDRSSSSSQESLNRPL. Residues 574–594 show a composition bias toward low complexity; sequence TGSTTSRASTVSTKSVSTTGS. S600 carries the phosphoserine modification. A compositionally biased stretch (low complexity) spans 606 to 628; the sequence is AAASAKSKVSSSSGTTPFSSAAA. 4 positions are modified to phosphoserine: S636, S646, S647, and S649. Positions 645–658 are enriched in polar residues; sequence QSSGSATNVASTPD. T656 bears the Phosphothreonine mark. Residues 662–785 form an interaction with microtubules, MAPRE1 and MAPRE3 region; that stretch reads RSRAKVVSQS…FGLGQPGRIP (124 aa). The segment covering 673 to 692 has biased composition (low complexity); that stretch reads RSRSANPAGAGSRSSSPGKL. Residues S684, S688, S695, and S705 each carry the phosphoserine modification. Residues 693 to 705 show a composition bias toward gly residues; the sequence is LGSGYGGLTGGSS. T711 carries the phosphothreonine modification. At S714 the chain carries Phosphoserine. Residues 724-733 show a composition bias toward polar residues; that stretch reads QGCSRETSPN. A phosphoserine mark is found at S787, S797, and S823. The HEAT 5 repeat unit spans residues 974-1011; the sequence is QQFNILMRFIVDQTQTPNLKVKVAILKYIESLARQMDP. Disordered stretches follow at residues 1080–1120 and 1136–1156; these read HLKN…CSHG and AKHP…SHKA. Polar residues predominate over residues 1082–1097; the sequence is KNSSNTSVGSPSNTIG. A Phosphoserine modification is found at S1091. T1095 and T1099 each carry phosphothreonine. Residues 1106-1115 show a composition bias toward low complexity; it reads SRTSPLTSPT. S1113 bears the Phosphoserine mark. Residues S1196 and S1223 each carry the phosphoserine modification. The segment at 1215-1238 is disordered; that stretch reads VSRDGGAASPATEGRGGSEVEGGR. The tract at residues 1254 to 1538 is interaction with CLIP2; it reads RAFPGPRARD…SSSSDVSTHS (285 aa). The interaction with PHLDB2 and RSN stretch occupies residues 1254 to 1538; sequence RAFPGPRARD…SSSSDVSTHS (285 aa). Positions 1256-1538 are localization to kinetochores; the sequence is FPGPRARDYN…SSSSDVSTHS (283 aa). Residues 1299 to 1330 are a coiled coil; it reads DHSDLVADLLKELSNHNERVEERKGALLELLK. HEAT repeat units lie at residues 1342–1379 and 1460–1497; these read EHFK…NQPA and QLLV…VIGE.

It belongs to the CLASP family. Interacts with CLIP2, ERC1, MAPRE1, MAPRE3, microtubules, PHLDB2 and RSN. The interaction with ERC1 may be mediated by PHLDB2. Interacts with GCC2; recruits CLASP1 to Golgi membranes. Interacts with MACF1. Interacts with mtcl2 and MTCL1.

It localises to the cytoplasm. It is found in the cytoskeleton. Its subcellular location is the microtubule organizing center. The protein localises to the centrosome. The protein resides in the chromosome. It localises to the centromere. It is found in the kinetochore. Its subcellular location is the spindle. The protein localises to the golgi apparatus. The protein resides in the trans-Golgi network. In terms of biological role, microtubule plus-end tracking protein that promotes the stabilization of dynamic microtubules. Involved in the nucleation of noncentrosomal microtubules originating from the trans-Golgi network (TGN). Required for the polarization of the cytoplasmic microtubule arrays in migrating cells towards the leading edge of the cell. May act at the cell cortex to enhance the frequency of rescue of depolymerizing microtubules by attaching their plus-ends to cortical platforms composed of ERC1 and PHLDB2. This cortical microtubule stabilizing activity is regulated at least in part by phosphatidylinositol 3-kinase signaling. Also performs a similar stabilizing function at the kinetochore which is essential for the bipolar alignment of chromosomes on the mitotic spindle. The chain is CLIP-associating protein 1 (CLASP1) from Homo sapiens (Human).